The sequence spans 550 residues: Gamma-aminobutyric acid receptor subunit beta (550 aa).

A signal peptide spans 1 to 24 (MRRSKTRRIFHVSITLLLVSTIFC). Over 25-264 (QNGTKPHNNS…FQLRRSVGYF (240 aa)) the chain is Extracellular. N-linked (GlcNAc...) asparagine glycans are attached at residues Asn26, Asn32, Asn33, Asn45, Asn53, and Asn193. Cys180 and Cys194 are joined by a disulfide. The next 3 membrane-spanning stretches (helical) occupy residues 265–285 (IFQT…SFWI), 292–311 (ARVA…STGV), and 324–344 (IDIY…EYAA). Residues 345 to 527 (VNYSYWGRER…DVNLIDKYSR (183 aa)) are Cytoplasmic-facing. A disordered region spans residues 405 to 465 (AMSTSNTAAQ…TTSLKGARPH (61 aa)). Residues 406-421 (MSTSNTAAQNNNFEST) are compositionally biased toward polar residues. A helical transmembrane segment spans residues 528-548 (VVFPVCFIVFNLFYWSYYMMV).

It belongs to the ligand-gated ion channel (TC 1.A.9) family. Gamma-aminobutyric acid receptor (TC 1.A.9.5) subfamily.

The protein resides in the postsynaptic cell membrane. The protein localises to the cell membrane. Its function is as follows. GABA, an inhibitory neurotransmitter, mediates neuronal inhibition by binding to the GABA receptor and opening an integral chloride channel. The polypeptide is Gamma-aminobutyric acid receptor subunit beta (gab-1) (Caenorhabditis elegans).